The chain runs to 312 residues: Retron Ec83 reverse transcriptase (312 aa).

In terms of domain architecture, Reverse transcriptase spans 14–239; sequence PDFDVLLKSR…HNRHVTGVTL (226 aa). Mg(2+) contacts are provided by D97, D185, and D186.

It belongs to the bacterial reverse transcriptase family.

The enzyme catalyses DNA(n) + a 2'-deoxyribonucleoside 5'-triphosphate = DNA(n+1) + diphosphate. In terms of biological role, reverse transcriptase (RT) component of antiviral defense system retron Ec83, composed of a non-coding RNA (ncRNA), this reverse transcriptase (RT), a probable ATPase and a putative HNH endonuclease. Expression of retron Ec83 confers protection against bacteriophages T2, T4 and T6. At multiplicity of infection (MOI) of 0.02 cultures slow growth when infected with T4 but do not collapse, at MOI 2 cultures enter growth stasis. Responsible for synthesis of msDNA-Ec83 (a linear ssDNA with a 5'-terminal phosphate residue). Unlike most known msDNAs the mature product from the original strain does not have an RNA component. When the ncRNA plus RT are expressed in strain K12 / JM109 only linear DNA is seen in stationary phase cells, but logarithmic phase cells have both a linear and branched msDNA (a branched molecule with RNA linked by a 2',5'-phosphodiester bond to ssDNA, a 'classic' retron). The branched msDNA is probably the precursor for the mature linear msDNA, the precursor is cleaved endonucleolytically by ExoVII (xseA-xseB) leaving the observed mature 5'-phosphate ssDNA terminus. The retron transcript serves as primer (from a conserved internal G residue) and template for the reaction, and codes for the RT. Overexpression of the ncRNA and RT, which leads to increased levels of msDNA, is mutagenic in vivo. This may be due to a mismatch in the msDNA stem which binds and sequesters MutS and/or MutL. This Escherichia coli protein is Retron Ec83 reverse transcriptase.